The sequence spans 779 residues: Polyribonucleotide nucleotidyltransferase (779 aa).

Residues aspartate 490 and aspartate 496 each coordinate Mg(2+). A KH domain is found at 557-618 (PHILSLKINP…EAVKARIEAV (62 aa)). In terms of domain architecture, S1 motif spans 625-693 (GEEFEGTVVK…DRGKIDLIRP (69 aa)). Residues 699-752 (VPLREPRAPRGGDRGPRRDSDRGGDRGPRREFSDRGPRPEGARSERPEGQRTER) are compositionally biased toward basic and acidic residues. Positions 699-779 (VPLREPRAPR…AAPVFPRRED (81 aa)) are disordered. The segment covering 757-767 (PATQESSQSSD) has biased composition (polar residues).

It belongs to the polyribonucleotide nucleotidyltransferase family. Mg(2+) serves as cofactor.

The protein localises to the cytoplasm. It carries out the reaction RNA(n+1) + phosphate = RNA(n) + a ribonucleoside 5'-diphosphate. Involved in mRNA degradation. Catalyzes the phosphorolysis of single-stranded polyribonucleotides processively in the 3'- to 5'-direction. The polypeptide is Polyribonucleotide nucleotidyltransferase (Deinococcus radiodurans (strain ATCC 13939 / DSM 20539 / JCM 16871 / CCUG 27074 / LMG 4051 / NBRC 15346 / NCIMB 9279 / VKM B-1422 / R1)).